A 143-amino-acid chain; its full sequence is Anti-sigma F factor (143 aa).

Belongs to the anti-sigma-factor family.

The enzyme catalyses L-seryl-[protein] + ATP = O-phospho-L-seryl-[protein] + ADP + H(+). It catalyses the reaction L-threonyl-[protein] + ATP = O-phospho-L-threonyl-[protein] + ADP + H(+). In terms of biological role, binds to sigma F and blocks its ability to form an RNA polymerase holoenzyme (E-sigma F). Phosphorylates SpoIIAA on a serine residue. This phosphorylation may enable SpoIIAA to act as an anti-anti-sigma factor that counteracts SpoIIAB and thus releases sigma F from inhibition. The chain is Anti-sigma F factor from Clostridium acetobutylicum (strain ATCC 824 / DSM 792 / JCM 1419 / IAM 19013 / LMG 5710 / NBRC 13948 / NRRL B-527 / VKM B-1787 / 2291 / W).